A 171-amino-acid polypeptide reads, in one-letter code: Large ribosomal subunit protein uL10 (171 aa).

The protein belongs to the universal ribosomal protein uL10 family. As to quaternary structure, part of the ribosomal stalk of the 50S ribosomal subunit. The N-terminus interacts with L11 and the large rRNA to form the base of the stalk. The C-terminus forms an elongated spine to which L12 dimers bind in a sequential fashion forming a multimeric L10(L12)X complex.

Functionally, forms part of the ribosomal stalk, playing a central role in the interaction of the ribosome with GTP-bound translation factors. This is Large ribosomal subunit protein uL10 from Hyphomonas neptunium (strain ATCC 15444).